Consider the following 83-residue polypeptide: Protein ShK-like4 (83 aa).

A signal peptide spans 1-21; it reads MDTRVIAVLFVAIMVLSSTNA. Residues 22–48 constitute a propeptide that is removed on maturation; that stretch reads LPKQKGSYKNMNHADFLKGLDRASSKR. Disulfide bonds link C50–C82, C57–C75, and C67–C79. Residues 50–83 form the ShKT domain; it reads CRDSHWSCFFQSNYEDICSTAQAEECALSCGLCE.

In terms of processing, contains 3 disulfide bonds. As to expression, expressed in various neurons (ectodermal sensory cells) (in planulae and primary polyps). Not expressed in nematocytes.

Its function is as follows. Probable neuropeptide. The protein is Protein ShK-like4 of Nematostella vectensis (Starlet sea anemone).